Here is a 284-residue protein sequence, read N- to C-terminus: RNase adapter protein RapZ (284 aa).

8-15 is an ATP binding site; sequence GRSGSGKS. 56-59 contributes to the GTP binding site; sequence DVRN. The segment at 266–284 is RNA-binding; that stretch reads RSRGKNVQSRHRTLEKRKT.

It belongs to the RapZ-like family. RapZ subfamily. In terms of assembly, homotrimer.

Modulates the synthesis of GlmS, by affecting the processing and stability of the regulatory small RNA GlmZ. When glucosamine-6-phosphate (GlcN6P) concentrations are high in the cell, RapZ binds GlmZ and targets it to cleavage by RNase E. Consequently, GlmZ is inactivated and unable to activate GlmS synthesis. Under low GlcN6P concentrations, RapZ is sequestered and inactivated by an other regulatory small RNA, GlmY, preventing GlmZ degradation and leading to synthesis of GlmS. The protein is RNase adapter protein RapZ of Escherichia fergusonii (strain ATCC 35469 / DSM 13698 / CCUG 18766 / IAM 14443 / JCM 21226 / LMG 7866 / NBRC 102419 / NCTC 12128 / CDC 0568-73).